The chain runs to 269 residues: Eukaryotic translation initiation factor 3 subunit G-1 (269 aa).

One can recognise an RRM domain in the interval 188-266; sequence AAIRISNLSE…LILSVEWSKP (79 aa). Ser198 carries the post-translational modification Phosphoserine.

The protein belongs to the eIF-3 subunit G family. As to quaternary structure, component of the eukaryotic translation initiation factor 3 (eIF-3) complex. The eIF-3 complex interacts with pix.

The protein localises to the cytoplasm. In terms of biological role, RNA-binding component of the eukaryotic translation initiation factor 3 (eIF-3) complex, which is involved in protein synthesis of a specialized repertoire of mRNAs and, together with other initiation factors, stimulates binding of mRNA and methionyl-tRNAi to the 40S ribosome. The eIF-3 complex specifically targets and initiates translation of a subset of mRNAs involved in cell proliferation. This subunit can bind 18S rRNA. This chain is Eukaryotic translation initiation factor 3 subunit G-1, found in Drosophila melanogaster (Fruit fly).